The following is a 218-amino-acid chain: Dual specificity protein phosphatase TpbA (218 aa).

The first 28 residues, 1–28 (MHRSPLAWLRLLLAAVLGAFLLGGPLHA), serve as a signal peptide directing secretion. Positions 44 to 188 (DPSINLYRMS…YVRGADVDGL (145 aa)) constitute a Tyrosine-protein phosphatase domain. The active-site Proton donor/acceptor is the Asp105. Cys132 serves as the catalytic Phosphocysteine intermediate.

It belongs to the protein-tyrosine phosphatase family. As to quaternary structure, monomer in solution.

It localises to the periplasm. It carries out the reaction O-phospho-L-tyrosyl-[protein] + H2O = L-tyrosyl-[protein] + phosphate. The catalysed reaction is O-phospho-L-threonyl-[protein] + H2O = L-threonyl-[protein] + phosphate. It catalyses the reaction O-phospho-L-seryl-[protein] + H2O = L-seryl-[protein] + phosphate. Its activity is regulated as follows. The phosphatase activity is completely inhibited by trisodium orthovanadate, a tyrosine phosphatase specific inhibitor. In terms of biological role, phosphatase that regulates diverse phenotypes in P.aeruginosa via regulation of the concentration of cellular c-di-GMP. Acts by dephosphorylating the membrane-anchored diguanylate cyclase TpbB at tyrosine and serine/threonine sites, leading to inactivation of TpbB and reduced c-di-GMP production. The reduced cellular c-di-GMP concentration leads to reduced adhesin expression, reduced extracellular polysaccharide (EPS) production, pellicule production, cell aggregation and biofilm formation, and enhanced swimming and swarming. It affects colony morphology and controls rugose colony formation. TpbA also acts as a positive regulator of extracellular DNA (eDNA, a major component of the biofilm matrix) and cell lysis by reducing c-di-GMP concentrations. In vitro shows phosphatase activity toward p-nitrophenyl phosphate (pNPP), tyrosine phosphopeptides and a threonine phosphopeptide. Does not have phosphodiesterases (PDE) activity, and cannot degrade c-di-GMP. In Pseudomonas aeruginosa (strain UCBPP-PA14), this protein is Dual specificity protein phosphatase TpbA.